The sequence spans 4069 residues: Cardiomyopathy-associated protein 5 (4069 aa).

Disordered stretches follow at residues 1-177, 341-387, 442-525, 538-558, 597-705, 732-793, 844-872, 890-948, 979-1009, 1041-1097, 1160-1179, 1205-1237, 1540-1575, 1594-1742, 1757-1809, 1892-1988, 2064-2175, 2187-2259, 2385-2412, 2425-2463, 2494-2527, 2653-2706, and 2750-2862; these read MASR…SQVL, TVPS…DTPA, GLAA…EDSN, ESPL…VEHK, EYSV…VPSL, PSEE…RFTP, SSPD…APPL, LERY…FSPD, TSPS…VSIP, ADEE…PEIP, VKEE…SVPA, RKEE…PESE, KETE…ELEN, PAVE…EEFQ, HPAD…ITEP, ENWM…VKLA, TISS…KKGI, FGSS…SGDG, PQQP…SIIL, SEDR…LENR, TQIT…NERP, QEGN…VGTQ, and SSRD…SDVP. The segment covering 27–47 has biased composition (acidic residues); that stretch reads ETEEESEGEEDETAAESEEEP. Over residues 48–62 the composition is skewed to basic and acidic residues; sequence DSRLSDQDEEGKIKQ. Over residues 84–119 the composition is skewed to polar residues; sequence TWETNSSRSSTPWASEESQTSGVCSREGSTVNSPPG. The span at 130 to 153 shows a compositional bias: basic residues; sequence KVRKRTHKSKHGSPSLRRKGNRKR. The residue at position 155 (serine 155) is a Phosphoserine. Polar residues-rich tracts occupy residues 156-177 and 341-350; these read FESQ…SQVL and TVPSYSSSGR. Low complexity predominate over residues 489–499; the sequence is LEPSISLSEPL. Acidic residues predominate over residues 500 to 510; it reads MLEEPEKEEIE. Serine 631 is subject to Phosphoserine. Residues 640 to 659 show a composition bias toward low complexity; the sequence is AYSPAAAPTSESSLSPSTTE. Composition is skewed to polar residues over residues 664–673, 692–701, and 752–775; these read NQSPLFSTVT, PDSTSASEYS, and PSLS…TATS. Over residues 1049 to 1063 the composition is skewed to polar residues; that stretch reads TAATPVSEQFSSSQK. The span at 1085–1094 shows a compositional bias: basic and acidic residues; sequence DKSEKAEIKP. Positions 1214–1223 are enriched in polar residues; that stretch reads QEATAHVSQD. Positions 1621 to 1630 are enriched in basic and acidic residues; sequence EPEKKDKPHQ. Residues 1639 to 1662 are compositionally biased toward polar residues; it reads SEFSSDLGRQSGSIGTKQAKSPIT. Basic and acidic residues-rich tracts occupy residues 1668-1687, 1704-1714, and 1786-1795; these read VLEK…ENRE, LREESQNEEIK, and ILDKLSEETG. A compositionally biased stretch (polar residues) spans 1796 to 1808; the sequence is HPNSSQVLQSITE. A compositionally biased stretch (basic and acidic residues) spans 1935–1955; sequence SKDHTCEVRKQVLPHSAEESH. Over residues 1956 to 1980 the composition is skewed to polar residues; that stretch reads LSSQEAVSALDTSSGNTETLSSKSY. Positions 2085–2124 are enriched in basic and acidic residues; that stretch reads NEKEAHRSTPPFPEEKPLEESKMVQSKVIDDADEGKKPSP. Polar residues predominate over residues 2145-2155; sequence SPESPEVTQNP. Basic and acidic residues-rich tracts occupy residues 2162 to 2172 and 2232 to 2250; these read AKPDLPEEKGK and KPAD…DEPR. The segment covering 2387 to 2399 has biased composition (polar residues); the sequence is QPKSASSNFASKN. At serine 2404 the chain carries Phosphoserine. Residues 2441 to 2461 show a composition bias toward basic and acidic residues; sequence ISEEETKLRSVSPTEKKDNLE. Basic and acidic residues-rich tracts occupy residues 2661–2681, 2750–2769, and 2777–2804; these read KSSR…ESEL, SSRD…ESEL, and ITKE…ETKS. At serine 2813 the chain carries Phosphoserine. Residues 2830-2847 are compositionally biased toward basic and acidic residues; that stretch reads AVKKKEMPRSELTPERHT. The stretch at 2964 to 2988 forms a coiled coil; it reads SIDQEESEQMQDKLEYLEEKASFKT. Residues 3015 to 3031 show a composition bias toward basic and acidic residues; it reads PLKENKQKETHKTKEEI. Disordered stretches follow at residues 3015–3037, 3119–3156, 3204–3231, 3386–3421, and 3465–3495; these read PLKE…DSET, EKGH…PGMP, KKKE…SDTD, SGAT…QDEY, and EFAS…SSEV. Residues 3052–3365 form a required for RYR2 clustering region; it reads YFEKYTLIDY…GSHGNEVGNA (314 aa). Positions 3128–3138 are enriched in polar residues; that stretch reads PETQSQNSADR. Residues 3139-3150 are compositionally biased toward basic and acidic residues; that stretch reads NVSKDTKRDVDS. Residues 3213–3227 are compositionally biased toward polar residues; the sequence is EGDSVNSEASFPSRN. A Phosphoserine modification is found at serine 3228. Residues 3477-3489 show a composition bias toward basic and acidic residues; the sequence is EQKELGSERKEED. The tract at residues 3517 to 3544 is amphipathic helix H1; the sequence is KCPISATDKVFGTHKDHEVSTLDTAISA. A coiled-coil region spans residues 3544–3653; it reads AVKVQLAEFL…REAEELDEAV (110 aa). The tract at residues 3545–3672 is B-box coiled-coil; BBC; the sequence is VKVQLAEFLE…ERLLSAMEST (128 aa). The segment at 3631 to 3648 is amphipathic helix H2; it reads SMDTAKDTLETIVREAEE. 2 Fibronectin type-III domains span residues 3704–3805 and 3806–3898; these read VPQP…TAPS and TPVI…TRGT. The tract at residues 3751-3767 is amphipathic helix H3; sequence EVNELVEEYRLTVKESY. Residues 3880 to 4065 enclose the B30.2/SPRY domain; that stretch reads NAFGTSEQSE…LHLGIEPPDS (186 aa).

Interacts with PRKAR2A. Interacts with ACTN2 and DTNBP1/dysbindin. Interacts with DES. Interacts with DMD/dystrophin. Interacts with the calcineurin catalytic subunit PPP3CA. Interacts with TTN. Interacts with CAPN3; this interaction, which results in CMYA5 proteolysis, may protect CAPN3 from autolysis. Interacts with FSD2. Identified in a complex composed of FSD2, CMYA5 and RYR2. In terms of processing, phosphorylated by PKA. In terms of tissue distribution, expressed in skeletal muscle; at a strong level and in heart.

It localises to the nucleus. The protein resides in the sarcoplasmic reticulum. It is found in the cytoplasm. Its subcellular location is the perinuclear region. The protein localises to the myofibril. It localises to the sarcomere. The protein resides in the m line. May serve as an anchoring protein that mediates the subcellular compartmentation of protein kinase A (PKA) via binding to PRKAR2A. May function as a repressor of calcineurin-mediated transcriptional activity. May attenuate calcineurin ability to induce slow-fiber gene program in muscle and may negatively modulate skeletal muscle regeneration. Plays a role in the assembly of ryanodine receptor (RYR2) clusters in striated muscle. This is Cardiomyopathy-associated protein 5 (CMYA5) from Homo sapiens (Human).